The primary structure comprises 237 residues: Large ribosomal subunit protein uL1 (237 aa).

The protein belongs to the universal ribosomal protein uL1 family. Part of the 50S ribosomal subunit.

Binds directly to 23S rRNA. The L1 stalk is quite mobile in the ribosome, and is involved in E site tRNA release. In terms of biological role, protein L1 is also a translational repressor protein, it controls the translation of the L11 operon by binding to its mRNA. The sequence is that of Large ribosomal subunit protein uL1 from Chloroflexus aggregans (strain MD-66 / DSM 9485).